The following is a 94-amino-acid chain: Large ribosomal subunit protein uL23 (94 aa).

It belongs to the universal ribosomal protein uL23 family. In terms of assembly, part of the 50S ribosomal subunit. Contacts protein L29, and trigger factor when it is bound to the ribosome.

Functionally, one of the early assembly proteins it binds 23S rRNA. One of the proteins that surrounds the polypeptide exit tunnel on the outside of the ribosome. Forms the main docking site for trigger factor binding to the ribosome. This is Large ribosomal subunit protein uL23 from Mycoplasma mycoides subsp. mycoides SC (strain CCUG 32753 / NCTC 10114 / PG1).